The primary structure comprises 325 residues: Intelectin-2 (325 aa).

Residues 1-26 form the signal peptide; sequence MLSMLRTMTRLCFLLFFSVATSGCSA. One can recognise a Fibrinogen C-terminal domain in the interval 44–267; the sequence is FSFSSLPRSC…AANALCAGIK (224 aa). Residues Cys-53 and Cys-82 are joined by a disulfide bond. The Ca(2+) site is built by His-98, Glu-99, Asp-101, Gly-104, Gly-109, Asp-110, and Asp-145. 3 cysteine pairs are disulfide-bonded: Cys-106–Cys-292, Cys-211–Cys-271, and Cys-263–Cys-277. Ca(2+) contacts are provided by Asn-272, Glu-274, and Asp-294. 274–275 is an a carbohydrate binding site; sequence EH.

Expressed only in the small intestine.

The protein localises to the secreted. Functionally, may play a role in the defense system against pathogens. This chain is Intelectin-2 (ITLN2), found in Homo sapiens (Human).